We begin with the raw amino-acid sequence, 133 residues long: Hexon-interlacing protein (133 aa).

The stretch at 97 to 127 (REEDALSVVLTRMEELSQQLQDLFAKVALLN) forms a coiled coil.

The protein belongs to the adenoviridae hexon-interlacing protein family. As to quaternary structure, homotrimer. Interacts with hexon protein; this interaction tethers the hexons together. Self-interacts with adjacent proteins. Interacts with kinesin light chain KLC1; this interaction leads to capsid disruption at the nuclear pore complex during virus entry into host cell.

It localises to the virion. The protein localises to the host nucleus. Functionally, structural component of the virion that acts as a cement protein on the capsid exterior and forms triskelion structures consisting of three molecules that stabilize three hexon trimers at the center of each icosahedral facet and fixes the peripentonal hexons. Dispensable for assembly. During virus entry, recruits the anterograde motor kinesin-1 to the capsid docked at the nuclear pore complex thereby subjecting the docked capsid to a pulling force. The resulting tension leads to capsid disruption, dispersion of capsid fragments toward cell periphery and eventually viral DNA entry into the host nucleus. The sequence is that of Hexon-interlacing protein from Homo sapiens (Human).